Reading from the N-terminus, the 394-residue chain is Flap endonuclease 1-A (394 aa).

Residues 1–105 (MGIKGLTKLI…RELAKRFARR (105 aa)) are N-domain. Asp34 is a binding site for Mg(2+). A DNA-binding site is contributed by Arg71. The Mg(2+) site is built by Asp87, Glu159, Glu161, Asp180, and Asp182. An I-domain region spans residues 123–254 (DVEKYSKKTV…QTALKMIRQH (132 aa)). Residue Glu159 coordinates DNA. Gly232 and Asp234 together coordinate DNA. Mg(2+) is bound at residue Asp234. Residues 338 to 346 (SQGRLESFF) form an interaction with PCNA region. Residues 343–394 (ESFFGVSSSSSNKRKEAPDSEASAGKQVKTAAAVKPAKAASKKGPAKGGKKK) are disordered. A compositionally biased stretch (low complexity) spans 368–381 (KQVKTAAAVKPAKA). The span at 382–394 (ASKKGPAKGGKKK) shows a compositional bias: basic residues.

The protein belongs to the XPG/RAD2 endonuclease family. FEN1 subfamily. As to quaternary structure, interacts with PCNA. Three molecules of FEN1 bind to one PCNA trimer with each molecule binding to one PCNA monomer. PCNA stimulates the nuclease activity without altering cleavage specificity. It depends on Mg(2+) as a cofactor. In terms of processing, phosphorylated. Phosphorylation upon DNA damage induces relocalization to the nuclear plasma.

The protein resides in the nucleus. It localises to the nucleolus. The protein localises to the nucleoplasm. Its subcellular location is the mitochondrion. Its function is as follows. Structure-specific nuclease with 5'-flap endonuclease and 5'-3' exonuclease activities involved in DNA replication and repair. During DNA replication, cleaves the 5'-overhanging flap structure that is generated by displacement synthesis when DNA polymerase encounters the 5'-end of a downstream Okazaki fragment. It enters the flap from the 5'-end and then tracks to cleave the flap base, leaving a nick for ligation. Also involved in the long patch base excision repair (LP-BER) pathway, by cleaving within the apurinic/apyrimidinic (AP) site-terminated flap. Acts as a genome stabilization factor that prevents flaps from equilibrating into structures that lead to duplications and deletions. Also possesses 5'-3' exonuclease activity on nicked or gapped double-stranded DNA, and exhibits RNase H activity. Also involved in replication and repair of rDNA and in repairing mitochondrial DNA. This chain is Flap endonuclease 1-A, found in Physcomitrium patens (Spreading-leaved earth moss).